Here is a 658-residue protein sequence, read N- to C-terminus: ATP-dependent RNA helicase MRH4, mitochondrial (658 aa).

A mitochondrion-targeting transit peptide spans 1-32; sequence MLRQVTRACPFCEVRSLLGQAPRSLQPQTRLY. A compositionally biased stretch (polar residues) spans 25-37; it reads LQPQTRLYTQVQR. Positions 25–150 are disordered; that stretch reads LQPQTRLYTQ…RNDDGKRRTR (126 aa). A compositionally biased stretch (basic and acidic residues) spans 125–150; the sequence is LERERERRESHFERPKRNDDGKRRTR. The Q motif signature appears at 182–214; the sequence is DSFDKMPLLDTVQAAIKDALPALEYRSPTPAQS. A Helicase ATP-binding domain is found at 233–449; it reads STKKGGPEAF…ADRFPDMNRL (217 aa). 246 to 253 is a binding site for ATP; that stretch reads AETGSGKT. The interval 268–292 is disordered; it reads EQQEKEDAEAQAQKDADEAAAKAQD. The segment covering 279 to 292 has biased composition (basic and acidic residues); that stretch reads AQKDADEAAAKAQD. Positions 396–399 match the DEAD box motif; sequence DEAD. Residues 490–658 enclose the Helicase C-terminal domain; that stretch reads RSTGEYDPAE…EAMYRGEALI (169 aa). A compositionally biased stretch (polar residues) spans 552-562; it reads FTGSDTSTAIK. The interval 552–573 is disordered; that stretch reads FTGSDTSTAIKSSPDAPPKPEL.

Belongs to the DEAD box helicase family. MRH4 subfamily.

The protein resides in the mitochondrion. The catalysed reaction is ATP + H2O = ADP + phosphate + H(+). Its function is as follows. ATP-binding RNA helicase involved in mitochondrial RNA metabolism. Required for maintenance of mitochondrial DNA. The sequence is that of ATP-dependent RNA helicase MRH4, mitochondrial (MRH4) from Phaeosphaeria nodorum (strain SN15 / ATCC MYA-4574 / FGSC 10173) (Glume blotch fungus).